We begin with the raw amino-acid sequence, 351 residues long: Prostaglandin reductase 2 (351 aa).

99-100 provides a ligand contact to substrate; the sequence is FY. NADP(+)-binding positions include 165 to 168, Lys-192, Tyr-208, Asn-231, 253 to 259, 287 to 289, and Asn-337; these read GACG, CGQISQY, and FTV. 288–290 provides a ligand contact to substrate; that stretch reads TVL.

This sequence belongs to the NADP-dependent oxidoreductase L4BD family. In terms of assembly, monomer. Widely expressed with highest levels in adipose tissues.

The protein localises to the cytoplasm. It catalyses the reaction 13,14-dihydro-15-oxo-prostaglandin E2 + NAD(+) = 15-oxoprostaglandin E2 + NADH + H(+). The catalysed reaction is 13,14-dihydro-15-oxo-prostaglandin E2 + NADP(+) = 15-oxoprostaglandin E2 + NADPH + H(+). The enzyme catalyses 13,14-dihydro-15-oxo-PGF2alpha + NADP(+) = 15-oxoprostaglandin F2alpha + NADPH + H(+). It carries out the reaction 13,14-dihydro-15-oxo-prostaglandin E1 + NADP(+) = 15-oxoprostaglandin E1 + NADPH + H(+). It catalyses the reaction 13,14-dihydro-15-oxo-prostaglandin F1alpha + NADP(+) = 15-oxoprostaglandin F1alpha + NADPH + H(+). Functions as 15-oxo-prostaglandin 13-reductase and acts on 15-keto-PGE1, 15-keto-PGE2, 15-keto-PGE1-alpha and 15-keto-PGE2-alpha with highest activity towards 15-keto-PGE2. Overexpression represses transcriptional activity of PPARG and inhibits adipocyte differentiation. The sequence is that of Prostaglandin reductase 2 from Mus musculus (Mouse).